We begin with the raw amino-acid sequence, 72 residues long: MAVEKTNASSSLVEVIDRILDKGVCIDAWARVSLVGIELLAIEARVVVASVDTFLKYAEAVGLTTTATAMHA.

Belongs to the gas vesicle GvpA family. As to quaternary structure, the gas vesicle shell is 2 nm thick and consists of a single layer of this protein. It forms helical ribs nearly perpendicular to the long axis of the vesicle.

It is found in the gas vesicle shell. Gas vesicles are hollow, gas filled proteinaceous nanostructures found in some microorganisms. During planktonic growth they allow positioning of the organism at a favorable depth for light or nutrient acquisition. GvpA forms the protein shell. In Geotalea uraniireducens (strain Rf4) (Geobacter uraniireducens), this protein is Gas vesicle protein A.